Reading from the N-terminus, the 145-residue chain is Sec-independent protein translocase protein TatB (145 aa).

The chain crosses the membrane as a helical span at residues 1 to 21; the sequence is MLDVGMTELLCFAIIAILVLG.

The protein belongs to the TatB family. In terms of assembly, the Tat system comprises two distinct complexes: a TatABC complex, containing multiple copies of TatA, TatB and TatC subunits, and a separate TatA complex, containing only TatA subunits. Substrates initially bind to the TatABC complex, which probably triggers association of the separate TatA complex to form the active translocon.

The protein resides in the cell inner membrane. Its function is as follows. Part of the twin-arginine translocation (Tat) system that transports large folded proteins containing a characteristic twin-arginine motif in their signal peptide across membranes. Together with TatC, TatB is part of a receptor directly interacting with Tat signal peptides. TatB may form an oligomeric binding site that transiently accommodates folded Tat precursor proteins before their translocation. The chain is Sec-independent protein translocase protein TatB from Acinetobacter baumannii (strain ATCC 17978 / DSM 105126 / CIP 53.77 / LMG 1025 / NCDC KC755 / 5377).